A 180-amino-acid polypeptide reads, in one-letter code: Large ribosomal subunit protein uL6 (180 aa).

Belongs to the universal ribosomal protein uL6 family. Part of the 50S ribosomal subunit.

In terms of biological role, this protein binds to the 23S rRNA, and is important in its secondary structure. It is located near the subunit interface in the base of the L7/L12 stalk, and near the tRNA binding site of the peptidyltransferase center. The chain is Large ribosomal subunit protein uL6 from Protochlamydia amoebophila (strain UWE25).